Consider the following 76-residue polypeptide: Acyl carrier protein (76 aa).

The Carrier domain occupies 1-76; the sequence is MSIEERVKKI…SAIDYVQNNQ (76 aa). The residue at position 36 (S36) is an O-(pantetheine 4'-phosphoryl)serine.

It belongs to the acyl carrier protein (ACP) family. In terms of processing, 4'-phosphopantetheine is transferred from CoA to a specific serine of apo-ACP by AcpS. This modification is essential for activity because fatty acids are bound in thioester linkage to the sulfhydryl of the prosthetic group.

It localises to the cytoplasm. The protein operates within lipid metabolism; fatty acid biosynthesis. Its function is as follows. Carrier of the growing fatty acid chain in fatty acid biosynthesis. The sequence is that of Acyl carrier protein from Haemophilus influenzae (strain 86-028NP).